Reading from the N-terminus, the 359-residue chain is Type-1 angiotensin II receptor (359 aa).

Topologically, residues 1-25 (MILNSSTEDGIKRIQDDCPKAGRHN) are extracellular. Residue Asn-4 is glycosylated (N-linked (GlcNAc...) asparagine). Residues Gln-15 and Asp-17 each coordinate angiotensin II. Intrachain disulfides connect Cys-18–Cys-274 and Cys-101–Cys-180. Residues 26–55 (YIFVMIPTLYSIIFVVGIFGNSLVVIVIYF) form a helical membrane-spanning segment. Residues 56 to 61 (YMKLKT) are Cytoplasmic-facing. Residues 62–89 (VASVFLLNLALADLCFLLTLPLWAVYTA) traverse the membrane as a helical segment. Residues 90 to 98 (MEYRWPFGN) lie on the Extracellular side of the membrane. Residues 99–125 (YLCKIASASVSFNLYASVFLLTCLSID) form a helical membrane-spanning segment. The Cytoplasmic segment spans residues 126–141 (RYLAIVHPMKSRLRRT). Residues 142–165 (MLVAKVTCIIIWLLAGLASLPAII) traverse the membrane as a helical segment. At 166–190 (HRNVFFIENTNITVCAFHYESQNST) the chain is on the extracellular side. Position 167 (Arg-167) interacts with angiotensin II. An N-linked (GlcNAc...) asparagine glycan is attached at Asn-176. Phe-182, His-183, and Tyr-184 together coordinate angiotensin II. An N-linked (GlcNAc...) asparagine glycan is attached at Asn-188. A helical membrane pass occupies residues 191–216 (LPIGLGLTKNILGFLFPFLIILTSYT). Lys-199 is an angiotensin II binding site. Residues 217 to 239 (LIWKALKKAYEIQKNKPRNDDIF) are Cytoplasmic-facing. The helical transmembrane segment at 240–268 (KIIMAIVLFFFFSWIPHQIFTFLDVLIQL) threads the bilayer. The Extracellular segment spans residues 269–278 (GIIRDCRIAD). Residues 279–304 (IVDTAMPITICIAYFNNCLNPLFYGF) traverse the membrane as a helical segment. The Cytoplasmic segment spans residues 305–359 (LGKKFKKYFLQLLKYIPPKAKSHSNLSTKMSTLSYRPSDNVSSSTKKPAPCFEVE). Over residues 335-350 (STLSYRPSDNVSSSTK) the composition is skewed to polar residues. Positions 335–359 (STLSYRPSDNVSSSTKKPAPCFEVE) are disordered. A lipid anchor (S-palmitoyl cysteine) is attached at Cys-355.

It belongs to the G-protein coupled receptor 1 family. Interacts with MAS1. Interacts with ARRB1. Interacts with FLNA (via filamin repeat 21); increases PKA-mediated phosphorylation of FLNA. Post-translationally, C-terminal Ser or Thr residues may be phosphorylated.

It localises to the cell membrane. Its function is as follows. Receptor for angiotensin II, a vasoconstricting peptide, which acts as a key regulator of blood pressure and sodium retention by the kidney. The activated receptor in turn couples to G-alpha proteins G(q) (GNAQ, GNA11, GNA14 or GNA15) and thus activates phospholipase C and increases the cytosolic Ca(2+) concentrations, which in turn triggers cellular responses such as stimulation of protein kinase C. This Pan troglodytes (Chimpanzee) protein is Type-1 angiotensin II receptor (AGTR1).